The chain runs to 89 residues: Cornifin-B (89 aa).

The tract at residues 1-29 (MSSQQQKQPCTPPPQLQQQQVKQPCQPPP) is disordered. 8 repeat units span residues 3-14 (SQQQKQPCTPPP), 18-29 (QQQVKQPCQPPP), 31-38 (EPCIPKTK), 39-46 (EPCHPKVP), 47-54 (EPCHPKVP), 55-62 (EPCQPKVP), 63-70 (EPCHPKVP), and 71-78 (EPCPSIVT). The 2 X 12 AA approximate repeats stretch occupies residues 3-29 (SQQQKQPCTPPPQLQQQQVKQPCQPPP). The 6 X 8 AA approximate tandem repeats stretch occupies residues 31-78 (EPCIPKTKEPCHPKVPEPCHPKVPEPCQPKVPEPCHPKVPEPCPSIVT).

This sequence belongs to the cornifin (SPRR) family. Post-translationally, the N-terminus is blocked. As to expression, suprabasal layers of squamous-differentiated tissues such as epidermis, esophagus, tongue and trachea.

Its subcellular location is the cytoplasm. Cross-linked envelope protein of keratinocytes. It is a keratinocyte protein that first appears in the cell cytosol, but ultimately becomes cross-linked to membrane proteins by transglutaminase. All that results in the formation of an insoluble envelope beneath the plasma membrane. Can function as both amine donor and acceptor in transglutaminase-mediated cross-linkage. In Homo sapiens (Human), this protein is Cornifin-B (SPRR1B).